The sequence spans 79 residues: Suppressor of tumorigenicity 20 protein (79 aa).

As to expression, expressed in leukocytes, lung, spleen, liver, heart, kidney, muscle and uterine cervix. Down-regulated in cervical cancer.

Functionally, may act as a tumor suppressor. Promotes apoptosis of cancer cells. This chain is Suppressor of tumorigenicity 20 protein (ST20), found in Homo sapiens (Human).